A 157-amino-acid polypeptide reads, in one-letter code: Protein Smg homolog (157 aa).

This sequence belongs to the Smg family.

This is Protein Smg homolog from Stenotrophomonas maltophilia (strain R551-3).